The chain runs to 648 residues: Macrolide export ATP-binding/permease protein MacB (648 aa).

The ABC transporter domain occupies Leu-5–Thr-243. ATP is bound at residue Gly-41–Ser-48. 4 helical membrane-spanning segments follow: residues Leu-273–Gly-293, Leu-523–Ile-543, Ala-576–Phe-596, and Leu-600–Cys-620.

The protein belongs to the ABC transporter superfamily. Macrolide exporter (TC 3.A.1.122) family. As to quaternary structure, homodimer. Part of the tripartite efflux system MacAB-TolC, which is composed of an inner membrane transporter, MacB, a periplasmic membrane fusion protein, MacA, and an outer membrane component, TolC. The complex forms a large protein conduit and can translocate molecules across both the inner and outer membranes. Interacts with MacA.

The protein resides in the cell inner membrane. Part of the tripartite efflux system MacAB-TolC. MacB is a non-canonical ABC transporter that contains transmembrane domains (TMD), which form a pore in the inner membrane, and an ATP-binding domain (NBD), which is responsible for energy generation. Confers resistance against macrolides. The chain is Macrolide export ATP-binding/permease protein MacB from Shigella boydii serotype 4 (strain Sb227).